We begin with the raw amino-acid sequence, 83 residues long: Small ribosomal subunit protein bS16 (83 aa).

This sequence belongs to the bacterial ribosomal protein bS16 family.

This is Small ribosomal subunit protein bS16 from Thermosynechococcus vestitus (strain NIES-2133 / IAM M-273 / BP-1).